The chain runs to 1435 residues: Trafficking protein particle complex subunit 8 (1435 aa).

Residues Ser-273, Ser-279, and Ser-309 each carry the phosphoserine modification. Positions 301–321 (QLEQSSDPSNSIDGPDHLRSA) are disordered. The span at 302–312 (LEQSSDPSNSI) shows a compositional bias: polar residues.

Belongs to the TRS85 family. In terms of assembly, component of the multisubunit TRAPP (transport protein particle) complex, which includes TRAPPC2, TRAPPC2L, TRAPPC3, TRAPPC3L, TRAPPC4, TRAPPC5, TRAPPC8, TRAPPC9, TRAPPC10, TRAPPC11 and TRAPPC12. Interacts with TBC1D14. Interacts (via C-terminus) with TMEM131 (via C-terminus); the interaction is direct and is involved in collagen secretion.

The protein localises to the golgi apparatus. Its subcellular location is the cis-Golgi network. In terms of biological role, plays a role in endoplasmic reticulum to Golgi apparatus trafficking at a very early stage. Maintains together with TBC1D14 the cycling pool of ATG9 required for initiation of autophagy. Involved in collagen secretion. This chain is Trafficking protein particle complex subunit 8 (TRAPPC8), found in Homo sapiens (Human).